Here is a 169-residue protein sequence, read N- to C-terminus: MKPSSSNSRSKGHAKARRKTREELDQEARDRKRQKKRRGHAPGSRAAGGNTTSGSKGQNAPKDPRIGSKTPIPLGVAEKVTKQHKPKSEKPMLSPQAELELLETDERLDALLERLEAGETLSAEEQSWVDAKLDRIDELMQKLGLSYDDDEEEEEDEKQEDMMRLLRGN.

Disordered stretches follow at residues Met1–Glu100 and Gly144–Asn169. A compositionally biased stretch (basic residues) spans Ser10–Lys19. The segment covering Thr20–Asp30 has biased composition (basic and acidic residues). Residues Arg31–His40 show a composition bias toward basic residues. Over residues Gly49–Gln58 the composition is skewed to polar residues. Residues Tyr147–Gln159 show a composition bias toward acidic residues. Basic and acidic residues predominate over residues Glu160–Asn169.

Belongs to the YihI family. As to quaternary structure, interacts with Der.

A GTPase-activating protein (GAP) that modifies Der/EngA GTPase function. May play a role in ribosome biogenesis. This is Der GTPase-activating protein YihI from Escherichia coli O6:H1 (strain CFT073 / ATCC 700928 / UPEC).